Consider the following 153-residue polypeptide: Ribosome maturation factor RimP (153 aa).

The protein belongs to the RimP family.

The protein localises to the cytoplasm. Required for maturation of 30S ribosomal subunits. The sequence is that of Ribosome maturation factor RimP from Trichormus variabilis (strain ATCC 29413 / PCC 7937) (Anabaena variabilis).